The following is a 222-amino-acid chain: MASILARRSLNTLRARHLVLSGQALQGSHLSRLQSRGISYGSNKDDEEAEQLSKEISKDWNTVFERSINTLFLTEMVRGLSLTLKYFFDPKVTINYPFEKGPLSPRFRGEHALRRYPTGEERCIACKLCEAVCPAQAITIEAEEREDGSRRTTRYDIDMTKCIYCGFCQEACPVDAIVEGPNFEFATETHEELLYDKEKLLENGDRWETEIAENLRSESLYR.

4Fe-4S ferredoxin-type domains lie at 114-143 and 153-182; these read RRYP…IEAE and TRYD…EGPN. Positions 123, 126, 129, 133, 162, 165, 168, and 172 each coordinate [4Fe-4S] cluster.

Belongs to the complex I 23 kDa subunit family. Complex I is composed of at least 49 different subunits. This is a component of the iron-sulfur (IP) fragment of the enzyme. [4Fe-4S] cluster is required as a cofactor.

It is found in the mitochondrion. It carries out the reaction a ubiquinone + NADH + 5 H(+)(in) = a ubiquinol + NAD(+) + 4 H(+)(out). In terms of biological role, core subunit of the mitochondrial membrane respiratory chain NADH dehydrogenase (Complex I) that is believed to belong to the minimal assembly required for catalysis. Complex I functions in the transfer of electrons from NADH to the respiratory chain. The immediate electron acceptor for the enzyme is believed to be ubiquinone. May donate electrons to ubiquinone. This chain is NADH dehydrogenase [ubiquinone] iron-sulfur protein 8-A, mitochondrial, found in Arabidopsis thaliana (Mouse-ear cress).